Here is a 500-residue protein sequence, read N- to C-terminus: NAD(P)H-quinone oxidoreductase chain 4, chloroplastic (500 aa).

The next 14 membrane-spanning stretches (helical) occupy residues 4-24, 37-57, 80-100, 113-130, 134-154, 167-187, 208-228, 242-262, 272-292, 305-325, 330-350, 386-406, 416-436, and 462-482; these read FYWL…IALL, ICIC…HFQL, LGID…TTLA, LFHF…GLFS, LLLF…LLSM, FILY…GMGL, ALEI…SPII, HYST…YGLV, AHSI…IYAA, IAYS…SITD, GAIL…FLAG, LALP…GIIT, ILIT…SLSM, and IFIL…PDFV.

Belongs to the complex I subunit 4 family.

It localises to the plastid. Its subcellular location is the chloroplast thylakoid membrane. It carries out the reaction a plastoquinone + NADH + (n+1) H(+)(in) = a plastoquinol + NAD(+) + n H(+)(out). The enzyme catalyses a plastoquinone + NADPH + (n+1) H(+)(in) = a plastoquinol + NADP(+) + n H(+)(out). The chain is NAD(P)H-quinone oxidoreductase chain 4, chloroplastic from Nuphar advena (Common spatterdock).